The primary structure comprises 201 residues: Recombination protein RecR (201 aa).

Residues 57 to 72 form a C4-type zinc finger; the sequence is CKYCSNFGNKDECDIC. A Toprim domain is found at 80–176; it reads TKLMIVTTNE…QIYRIGFGIP (97 aa).

Belongs to the RecR family.

May play a role in DNA repair. It seems to be involved in an RecBC-independent recombinational process of DNA repair. It may act with RecF and RecO. This Ureaplasma urealyticum serovar 10 (strain ATCC 33699 / Western) protein is Recombination protein RecR.